Consider the following 201-residue polypeptide: ADP-ribosylation factor-like protein 4D (201 aa).

Residue Gly-2 is the site of N-myristoyl glycine attachment. GTP is bound by residues 28–35, 76–80, and 135–138; these read GLDSAGKT, DVGGQ, and NKQD.

It belongs to the small GTPase superfamily. Arf family. In terms of assembly, interacts with CYTH2; the interaction is direct and ARL4D GTP-dependent. Does not interact with ARL4D.

The protein resides in the nucleus. The protein localises to the nucleolus. Its subcellular location is the cell membrane. It localises to the cytoplasm. Small GTP-binding protein which cycles between an inactive GDP-bound and an active GTP-bound form, and the rate of cycling is regulated by guanine nucleotide exchange factors (GEF) and GTPase-activating proteins (GAP). GTP-binding protein that does not act as an allosteric activator of the cholera toxin catalytic subunit. Recruits CYTH1, CYTH2, CYTH3 and CYTH4 to the plasma membrane in GDP-bound form. In Homo sapiens (Human), this protein is ADP-ribosylation factor-like protein 4D (ARL4D).